A 265-amino-acid chain; its full sequence is Ubiquinone biosynthesis protein COQ4 homolog, mitochondrial (265 aa).

A mitochondrion-targeting transit peptide spans 1-30; that stretch reads MMQRSWQSWRRGLTLGLASRRSYVASVEAP. Zn(2+) is bound by residues H170, D171, H174, and E186.

Belongs to the COQ4 family. Component of a multi-subunit COQ enzyme complex. Requires Zn(2+) as cofactor.

Its subcellular location is the mitochondrion inner membrane. It carries out the reaction a 4-hydroxy-3-methoxy-5-(all-trans-polyprenyl)benzoate + H(+) = a 2-methoxy-6-(all-trans-polyprenyl)phenol + CO2. Its pathway is cofactor biosynthesis; ubiquinone biosynthesis. Its function is as follows. Lyase that catalyzes the C1-decarboxylation of 4-hydroxy-3-methoxy-5-(all-trans-polyprenyl)benzoic acid into 2-methoxy-6-(all-trans-polyprenyl)phenol during ubiquinone biosynthesis. The protein is Ubiquinone biosynthesis protein COQ4 homolog, mitochondrial of Drosophila virilis (Fruit fly).